A 67-amino-acid polypeptide reads, in one-letter code: Ferredoxin (67 aa).

2 4Fe-4S ferredoxin-type domains span residues 3-31 (WKVS…MNDE) and 36-67 (PKVE…IEEA). Residues cysteine 12, aspartate 15, and cysteine 18 each coordinate [4Fe-4S] cluster. An intrachain disulfide couples cysteine 22 to cysteine 49. Residue cysteine 57 coordinates [4Fe-4S] cluster.

Requires [4Fe-4S] cluster as cofactor. [3Fe-4S] cluster serves as cofactor.

Functionally, ferredoxins are iron-sulfur proteins that transfer electrons in a wide variety of metabolic reactions. This chain is Ferredoxin (fdxA), found in Pyrococcus abyssi (strain GE5 / Orsay).